Here is a 276-residue protein sequence, read N- to C-terminus: Rhamnulose-1-phosphate aldolase (276 aa).

Residue E117 is part of the active site. Zn(2+)-binding residues include H141, H143, and H212.

The protein belongs to the aldolase class II family. RhaD subfamily. In terms of assembly, homotetramer. Requires Zn(2+) as cofactor.

The protein localises to the cytoplasm. It catalyses the reaction L-rhamnulose 1-phosphate = (S)-lactaldehyde + dihydroxyacetone phosphate. Its pathway is carbohydrate degradation; L-rhamnose degradation; glycerone phosphate from L-rhamnose: step 3/3. Catalyzes the reversible cleavage of L-rhamnulose-1-phosphate to dihydroxyacetone phosphate (DHAP) and L-lactaldehyde. This is Rhamnulose-1-phosphate aldolase from Enterobacter sp. (strain 638).